The primary structure comprises 381 residues: UDP-4-amino-4-deoxy-L-arabinose--oxoglutarate aminotransferase (381 aa).

Lys-182 bears the N6-(pyridoxal phosphate)lysine mark.

It belongs to the DegT/DnrJ/EryC1 family. ArnB subfamily. In terms of assembly, homodimer. Pyridoxal 5'-phosphate is required as a cofactor.

The enzyme catalyses UDP-4-amino-4-deoxy-beta-L-arabinose + 2-oxoglutarate = UDP-beta-L-threo-pentopyranos-4-ulose + L-glutamate. It participates in nucleotide-sugar biosynthesis; UDP-4-deoxy-4-formamido-beta-L-arabinose biosynthesis; UDP-4-deoxy-4-formamido-beta-L-arabinose from UDP-alpha-D-glucuronate: step 2/3. The protein operates within bacterial outer membrane biogenesis; lipopolysaccharide biosynthesis. Catalyzes the conversion of UDP-4-keto-arabinose (UDP-Ara4O) to UDP-4-amino-4-deoxy-L-arabinose (UDP-L-Ara4N). The modified arabinose is attached to lipid A and is required for resistance to polymyxin and cationic antimicrobial peptides. The chain is UDP-4-amino-4-deoxy-L-arabinose--oxoglutarate aminotransferase from Edwardsiella ictaluri (strain 93-146).